Here is a 612-residue protein sequence, read N- to C-terminus: UvrABC system protein C (612 aa).

The 79-residue stretch at 20-98 (THSGVYRMLD…IKQHRPKYNI (79 aa)) folds into the GIY-YIG domain. The 36-residue stretch at 208 to 243 (SSVLEEISANMYQASEDMEYEKAQVYRDQLVVLRKL) folds into the UVR domain.

This sequence belongs to the UvrC family. Interacts with UvrB in an incision complex.

It is found in the cytoplasm. Functionally, the UvrABC repair system catalyzes the recognition and processing of DNA lesions. UvrC both incises the 5' and 3' sides of the lesion. The N-terminal half is responsible for the 3' incision and the C-terminal half is responsible for the 5' incision. The sequence is that of UvrABC system protein C from Francisella tularensis subsp. holarctica (strain LVS).